Reading from the N-terminus, the 436-residue chain is UPF0597 protein YhaM (436 aa).

The protein belongs to the UPF0597 family.

This is UPF0597 protein YhaM from Escherichia coli O45:K1 (strain S88 / ExPEC).